The chain runs to 105 residues: Nucleoid-associated protein ABC0038 (105 aa).

The span at 1–22 (MEMKNMGNMMKQMQKMQKQMMK) shows a compositional bias: low complexity. Residues 1–26 (MEMKNMGNMMKQMQKMQKQMMKAQEE) are disordered.

It belongs to the YbaB/EbfC family. Homodimer.

It is found in the cytoplasm. It localises to the nucleoid. Binds to DNA and alters its conformation. May be involved in regulation of gene expression, nucleoid organization and DNA protection. The polypeptide is Nucleoid-associated protein ABC0038 (Shouchella clausii (strain KSM-K16) (Alkalihalobacillus clausii)).